Reading from the N-terminus, the 291-residue chain is uncharacterized protein (291 aa).

Residues glycine 5–serine 196 enclose the PNPLA domain. A GXGXXG motif is present at residues glycine 9–glycine 14. A helical transmembrane segment spans residues valine 34 to glycine 50. The GXSXG signature appears at glycine 36–glycine 40. Serine 38 acts as the Nucleophile in catalysis. The active-site Proton acceptor is the aspartate 183. A DGA/G motif is present at residues aspartate 183–glycine 185.

Its subcellular location is the cell membrane. Its function is as follows. Probable lipid hydrolase. This is an uncharacterized protein from Bacillus subtilis (strain 168).